The following is a 44-amino-acid chain: Photosystem I reaction center subunit IX (44 aa).

A helical transmembrane segment spans residues 7–27 (YLSVAPVVSTLWFAALAGLLI).

This sequence belongs to the PsaJ family.

Its subcellular location is the plastid. It is found in the chloroplast thylakoid membrane. In terms of biological role, may help in the organization of the PsaE and PsaF subunits. The chain is Photosystem I reaction center subunit IX from Lotus japonicus (Lotus corniculatus var. japonicus).